A 325-amino-acid chain; its full sequence is MNTVNYLRISLVDRCNFRCSYCMPTGEAIAYLHRSQILSYEELLFLVGEVFLPLGIDRFRLTGGEPLLRRGVVGFVRALVGLPGVADVSLSTNAYLLEELAEDLYAAGLRRVNISLDSLDPGVFARITGRDHWSKVWAGIQAAHRVGFDPLKLNVVVLPGINEQEVPDLAALTIDRQWHVRFIEFMPIGNTGYFEQAGWVNSETLRSRIRERFGLGEGACYGNGPADVFQIPGAKGTVGFISQMSECFCSRCNRVRLAADGFLRPCLLNEADQIDLKTPLRAGAGAAQLRELVSELLLRKPEINFRERDRGTTGSYGRTMSQIGG.

One can recognise a Radical SAM core domain in the interval 1 to 226 (MNTVNYLRIS…EGACYGNGPA (226 aa)). R8 provides a ligand contact to GTP. Residues C15 and C19 each contribute to the [4Fe-4S] cluster site. An S-adenosyl-L-methionine-binding site is contributed by Y21. A [4Fe-4S] cluster-binding site is contributed by C22. GTP is bound at residue R60. Residue G64 participates in S-adenosyl-L-methionine binding. S91 lines the GTP pocket. S115 provides a ligand contact to S-adenosyl-L-methionine. Position 152 (K152) interacts with GTP. M186 provides a ligand contact to S-adenosyl-L-methionine. [4Fe-4S] cluster is bound by residues C249 and C252. Residue 254–256 (RVR) coordinates GTP. [4Fe-4S] cluster is bound at residue C266.

The protein belongs to the radical SAM superfamily. MoaA family. In terms of assembly, monomer and homodimer. [4Fe-4S] cluster serves as cofactor.

The catalysed reaction is GTP + AH2 + S-adenosyl-L-methionine = (8S)-3',8-cyclo-7,8-dihydroguanosine 5'-triphosphate + 5'-deoxyadenosine + L-methionine + A + H(+). The protein operates within cofactor biosynthesis; molybdopterin biosynthesis. In terms of biological role, catalyzes the cyclization of GTP to (8S)-3',8-cyclo-7,8-dihydroguanosine 5'-triphosphate. In Gloeobacter violaceus (strain ATCC 29082 / PCC 7421), this protein is GTP 3',8-cyclase.